A 506-amino-acid chain; its full sequence is ATP synthase subunit alpha (506 aa).

172–179 serves as a coordination point for ATP; that stretch reads GDRKTGKT.

It belongs to the ATPase alpha/beta chains family. In terms of assembly, F-type ATPases have 2 components, CF(1) - the catalytic core - and CF(0) - the membrane proton channel. CF(1) has five subunits: alpha(3), beta(3), gamma(1), delta(1), epsilon(1). CF(0) has three main subunits: a(1), b(2) and c(9-12). The alpha and beta chains form an alternating ring which encloses part of the gamma chain. CF(1) is attached to CF(0) by a central stalk formed by the gamma and epsilon chains, while a peripheral stalk is formed by the delta and b chains.

The protein resides in the cell membrane. It catalyses the reaction ATP + H2O + 4 H(+)(in) = ADP + phosphate + 5 H(+)(out). Produces ATP from ADP in the presence of a proton gradient across the membrane. The alpha chain is a regulatory subunit. The chain is ATP synthase subunit alpha from Lactobacillus gasseri (strain ATCC 33323 / DSM 20243 / BCRC 14619 / CIP 102991 / JCM 1131 / KCTC 3163 / NCIMB 11718 / NCTC 13722 / AM63).